Consider the following 173-residue polypeptide: Archaemetzincin (173 aa).

Residue histidine 130 coordinates Zn(2+). Glutamate 131 functions as the Proton acceptor in the catalytic mechanism. Positions 134, 140, 141, 146, 165, and 168 each coordinate Zn(2+).

It belongs to the peptidase M54 family. As to quaternary structure, monomer. It depends on Zn(2+) as a cofactor.

Its function is as follows. Probable zinc metalloprotease whose natural substrate is unknown. This is Archaemetzincin from Haloarcula marismortui (strain ATCC 43049 / DSM 3752 / JCM 8966 / VKM B-1809) (Halobacterium marismortui).